Consider the following 87-residue polypeptide: Small ribosomal subunit protein bS20 (87 aa).

The tract at residues 1 to 26 is disordered; it reads MANIKSAKKRAVQSEKARKHNASRRS.

Belongs to the bacterial ribosomal protein bS20 family.

Functionally, binds directly to 16S ribosomal RNA. This is Small ribosomal subunit protein bS20 from Klebsiella pneumoniae (strain 342).